A 102-amino-acid chain; its full sequence is Co-chaperonin GroES (102 aa).

This sequence belongs to the GroES chaperonin family. As to quaternary structure, heptamer of 7 subunits arranged in a ring. Interacts with the chaperonin GroEL.

The protein resides in the cytoplasm. Functionally, together with the chaperonin GroEL, plays an essential role in assisting protein folding. The GroEL-GroES system forms a nano-cage that allows encapsulation of the non-native substrate proteins and provides a physical environment optimized to promote and accelerate protein folding. GroES binds to the apical surface of the GroEL ring, thereby capping the opening of the GroEL channel. The chain is Co-chaperonin GroES from Streptomyces avermitilis (strain ATCC 31267 / DSM 46492 / JCM 5070 / NBRC 14893 / NCIMB 12804 / NRRL 8165 / MA-4680).